Reading from the N-terminus, the 563-residue chain is DEAD-box ATP-dependent RNA helicase 25 (563 aa).

The tract at residues 21–57 is disordered; the sequence is KKLTSDEDGSGKLVKDNNKSLKRGREGKSDVDEPLIK. The span at 23-56 shows a compositional bias: basic and acidic residues; sequence LTSDEDGSGKLVKDNNKSLKRGREGKSDVDEPLI. At serine 25 the chain carries Phosphoserine. Positions 80-108 match the Q motif motif; it reads TRFDQFPLSPLTLKGIEDAGFKTMTVVQE. The 184-residue stretch at 111 to 294 folds into the Helicase ATP-binding domain; sequence LPLILQGKDI…HVALKRDHEF (184 aa). 124–131 is an ATP binding site; the sequence is AKTGTGKT. The short motif at 242–245 is the DEAD box element; the sequence is DEAD. The Helicase C-terminal domain maps to 328–479; that stretch reads LLKKHITDNV…AVKKVQKGLI (152 aa).

It belongs to the DEAD box helicase family.

It carries out the reaction ATP + H2O = ADP + phosphate + H(+). In Arabidopsis thaliana (Mouse-ear cress), this protein is DEAD-box ATP-dependent RNA helicase 25 (RH25).